Consider the following 357-residue polypeptide: Serine proteinase inhibitor 1 (357 aa).

The protein belongs to the serpin family. Poxviruses subfamily.

It localises to the host cytoplasm. In terms of biological role, plays a role in mediating viral host range. May act to inhibit a caspase independent form of apoptosis to allow efficient virus replication in infected cells. The protein is Serine proteinase inhibitor 1 (OPG208) of Monkeypox virus.